Reading from the N-terminus, the 213-residue chain is Ras-related protein Rab-2 (213 aa).

Residues T15, G16, G18, K19, S20, C21, Q32, P33, H35, T38, G64, N119, D122, and A150 each coordinate GTP. S20 lines the Mg(2+) pocket. Residue T38 participates in Mg(2+) binding. The interval 190-213 (QHSPTNPSLPGAGGAAGAANSGCC) is disordered. S-geranylgeranyl cysteine attachment occurs at residues C212 and C213.

This sequence belongs to the small GTPase superfamily. Rab family. Interacts (GTP-bound form) with Vps16A and Vps39; the interaction with Vps39 is probably direct.

It is found in the vesicle. Its subcellular location is the cytoplasmic vesicle. The protein resides in the cell projection. It localises to the axon. The protein localises to the presynapse. It is found in the presynaptic active zone. Its subcellular location is the golgi apparatus. The protein resides in the trans-Golgi network. It localises to the perikaryon. The protein localises to the autophagosome membrane. It is found in the autolysosome membrane. The enzyme catalyses GTP + H2O = GDP + phosphate + H(+). Its function is as follows. May be involved in bidirectional endoplasmic reticulum (ER) to Golgi trafficking. Together with Rab7 involved in promoting fusion of autophagosomes and endosomes with lysosomes, probably through recruitment of the HOPS tethering complex. Involved in biosynthetic transport to lysosomes. In larval motor neurons, mediates the biogenesis of presynaptic cargo vesicles and their long-range axonal trafficking to synaptic termini. Not involved in axonal trafficking of mitochondria. During vesicle biogenesis, active zone proteins (including brp/Bruchpilot) and synaptic vesicle proteins (including VGlut) are sorted from the trans-Golgi in a Rab2-dependent manner via, at least, two independent routes. Acts upstream of Arl8 during presynaptic precursor vesicle biogenesis. Associated with lysosomal marker positive presynaptic cargo vesicles during anterograde and retrograde axonal trafficking, probably while in its GTP-bound active state. Involved in the delivery of presynaptic cargos, but not presynapse assembly or active zone function at synaptic termini. Required for autophagocytosis-dependent remodeling of myofibrils and transverse-tubules (T-tubules) during metamorphosis. This chain is Ras-related protein Rab-2, found in Drosophila melanogaster (Fruit fly).